A 432-amino-acid polypeptide reads, in one-letter code: Amino-acid acetyltransferase (432 aa).

Residues 286–425 (ELVREAAIED…ASLYNFQRNS (140 aa)) form the N-acetyltransferase domain.

The protein belongs to the acetyltransferase family. ArgA subfamily.

The protein localises to the cytoplasm. It catalyses the reaction L-glutamate + acetyl-CoA = N-acetyl-L-glutamate + CoA + H(+). It functions in the pathway amino-acid biosynthesis; L-arginine biosynthesis; N(2)-acetyl-L-ornithine from L-glutamate: step 1/4. The sequence is that of Amino-acid acetyltransferase from Pseudomonas syringae pv. tomato (strain ATCC BAA-871 / DC3000).